Reading from the N-terminus, the 209-residue chain is V-type ATP synthase subunit D (209 aa).

This sequence belongs to the V-ATPase D subunit family.

Produces ATP from ADP in the presence of a proton gradient across the membrane. The chain is V-type ATP synthase subunit D (atpD) from Chlamydia pneumoniae (Chlamydophila pneumoniae).